A 111-amino-acid polypeptide reads, in one-letter code: Complement inhibitor CirpT1 (111 aa).

An N-terminal signal peptide occupies residues 1–19 (MATLIAARTKRKAPRVRIF). 4 disulfide bridges follow: Cys40/Cys64, Cys59/Cys98, Cys76/Cys99, and Cys85/Cys104.

The protein belongs to the CirpT family. As to expression, expressed in salivary glands.

The protein resides in the secreted. Complement inhibitor. Prevents complement-mediated activation of C5 by sterically preventing direct binding of C5 to its convertase (binding with domains MG4 and MG5). Binds C5 at a different binding site than the other tick complement inhibitors OmCI and RaCI3, and the drug eculizumab. Inhibits the complement in human, rat and guinea pig, and also shows a reduced inhibition in rabbit and pig. This is Complement inhibitor CirpT1 from Rhipicephalus pulchellus (Yellow backed tick).